An 89-amino-acid polypeptide reads, in one-letter code: Co-chaperonin GroES (89 aa).

Belongs to the GroES chaperonin family. Heptamer of 7 subunits arranged in a ring. Interacts with the chaperonin GroEL.

The protein resides in the cytoplasm. In terms of biological role, together with the chaperonin GroEL, plays an essential role in assisting protein folding. The GroEL-GroES system forms a nano-cage that allows encapsulation of the non-native substrate proteins and provides a physical environment optimized to promote and accelerate protein folding. GroES binds to the apical surface of the GroEL ring, thereby capping the opening of the GroEL channel. The protein is Co-chaperonin GroES of Pseudothermotoga lettingae (strain ATCC BAA-301 / DSM 14385 / NBRC 107922 / TMO) (Thermotoga lettingae).